Consider the following 155-residue polypeptide: DNA-directed RNA polymerase II subunit rpb4 (155 aa).

Belongs to the eukaryotic RPB4 RNA polymerase subunit family. Component of the RNA polymerase II (Pol II) complex consisting of 12 subunits. RPB4 and RPB7 form a subcomplex that protrudes from the 10-subunit Pol II core complex.

It is found in the nucleus. Functionally, DNA-dependent RNA polymerase catalyzes the transcription of DNA into RNA using the four ribonucleoside triphosphates as substrates. Component of RNA polymerase II which synthesizes mRNA precursors and many functional non-coding RNAs. Pol II is the central component of the basal RNA polymerase II transcription machinery. It is composed of mobile elements that move relative to each other. RPB4 is part of a subcomplex with RPB7 that binds to a pocket formed by RPB1, RPB2 and RPB6 at the base of the clamp element. The RPB4-RPB7 subcomplex seems to lock the clamp via RPB7 in the closed conformation thus preventing double-stranded DNA to enter the active site cleft. The RPB4-RPB7 subcomplex binds single-stranded DNA and RNA. This is DNA-directed RNA polymerase II subunit rpb4 (polr2d) from Dictyostelium discoideum (Social amoeba).